We begin with the raw amino-acid sequence, 242 residues long: Small ribosomal subunit protein uS2 (242 aa).

The protein belongs to the universal ribosomal protein uS2 family.

The protein is Small ribosomal subunit protein uS2 of Mannheimia succiniciproducens (strain KCTC 0769BP / MBEL55E).